The sequence spans 285 residues: HTH-type transcriptional regulator YofA (285 aa).

An HTH lysR-type domain is found at 1 to 58 (MESGDLKIFQAVAREGSITKAAQMLNYVQSNVTARVHNLEEDLNIRLFHRTNRGMKLT). The segment at residues 18 to 37 (ITKAAQMLNYVQSNVTARVH) is a DNA-binding region (H-T-H motif).

Belongs to the LysR transcriptional regulatory family.

It localises to the cytoplasm. In terms of biological role, regulates expression of the cell division protein ftsW, and is essential for cell viability during stationary phase. The sequence is that of HTH-type transcriptional regulator YofA (yofA) from Bacillus subtilis (strain 168).